Here is a 190-residue protein sequence, read N- to C-terminus: MENLHKRILEEGQALSNDVLKVDSFLNHQVDADLMYEMGTYFKNYFKDHNITKIFTIESSGIAPTVMTAMQMNLPMVILKKQGSKILKGDVYQTTVHSFTKGTDYELTLQKKYINEDDNILIIDDFLANGEAALGAARLVEGAGAKVAGIGIVIEKSFQPGPKLLEEKGYDVYSLARIEKLEKGIIKIKK.

Positions 20 and 27 each coordinate xanthine. 5-phospho-alpha-D-ribose 1-diphosphate is bound at residue 128 to 132 (ANGEA). Residue Lys-156 participates in xanthine binding.

It belongs to the purine/pyrimidine phosphoribosyltransferase family. Xpt subfamily. As to quaternary structure, homodimer.

The protein resides in the cytoplasm. The enzyme catalyses XMP + diphosphate = xanthine + 5-phospho-alpha-D-ribose 1-diphosphate. It functions in the pathway purine metabolism; XMP biosynthesis via salvage pathway; XMP from xanthine: step 1/1. In terms of biological role, converts the preformed base xanthine, a product of nucleic acid breakdown, to xanthosine 5'-monophosphate (XMP), so it can be reused for RNA or DNA synthesis. This Clostridium botulinum (strain Eklund 17B / Type B) protein is Xanthine phosphoribosyltransferase.